We begin with the raw amino-acid sequence, 307 residues long: Aspartate carbamoyltransferase catalytic subunit (307 aa).

Carbamoyl phosphate is bound by residues R58 and T59. Position 86 (K86) interacts with L-aspartate. R108, H136, and Q139 together coordinate carbamoyl phosphate. Positions 169 and 223 each coordinate L-aspartate. G264 and P265 together coordinate carbamoyl phosphate.

This sequence belongs to the aspartate/ornithine carbamoyltransferase superfamily. ATCase family. In terms of assembly, heterododecamer (2C3:3R2) of six catalytic PyrB chains organized as two trimers (C3), and six regulatory PyrI chains organized as three dimers (R2).

The catalysed reaction is carbamoyl phosphate + L-aspartate = N-carbamoyl-L-aspartate + phosphate + H(+). It participates in pyrimidine metabolism; UMP biosynthesis via de novo pathway; (S)-dihydroorotate from bicarbonate: step 2/3. In terms of biological role, catalyzes the condensation of carbamoyl phosphate and aspartate to form carbamoyl aspartate and inorganic phosphate, the committed step in the de novo pyrimidine nucleotide biosynthesis pathway. The sequence is that of Aspartate carbamoyltransferase catalytic subunit from Moorella thermoacetica (strain ATCC 39073 / JCM 9320).